Here is a 114-residue protein sequence, read N- to C-terminus: T cell receptor beta variable 5-4 (114 aa).

The signal sequence occupies residues 1–21 (MGPGLLCWALLCLLGAGSVET). Residues 22-114 (GVTQSPTHLI…SALYLCASSL (93 aa)) enclose the Ig-like domain. An intrachain disulfide couples cysteine 42 to cysteine 110. Asparagine 90 carries N-linked (GlcNAc...) asparagine glycosylation.

Alpha-beta TR is a heterodimer composed of an alpha and beta chain; disulfide-linked. The alpha-beta TR is associated with the transmembrane signaling CD3 coreceptor proteins to form the TR-CD3 (TcR or TCR). The assembly of alpha-beta TR heterodimers with CD3 occurs in the endoplasmic reticulum where a single alpha-beta TR heterodimer associates with one CD3D-CD3E heterodimer, one CD3G-CD3E heterodimer and one CD247 homodimer forming a stable octameric structure. CD3D-CD3E and CD3G-CD3E heterodimers preferentially associate with TR alpha and TR beta chains, respectively. The association of the CD247 homodimer is the last step of TcR assembly in the endoplasmic reticulum and is required for transport to the cell surface.

It localises to the cell membrane. V region of the variable domain of T cell receptor (TR) beta chain that participates in the antigen recognition. Alpha-beta T cell receptors are antigen specific receptors which are essential to the immune response and are present on the cell surface of T lymphocytes. Recognize peptide-major histocompatibility (MH) (pMH) complexes that are displayed by antigen presenting cells (APC), a prerequisite for efficient T cell adaptive immunity against pathogens. Binding of alpha-beta TR to pMH complex initiates TR-CD3 clustering on the cell surface and intracellular activation of LCK that phosphorylates the ITAM motifs of CD3G, CD3D, CD3E and CD247 enabling the recruitment of ZAP70. In turn ZAP70 phosphorylates LAT, which recruits numerous signaling molecules to form the LAT signalosome. The LAT signalosome propagates signal branching to three major signaling pathways, the calcium, the mitogen-activated protein kinase (MAPK) kinase and the nuclear factor NF-kappa-B (NF-kB) pathways, leading to the mobilization of transcription factors that are critical for gene expression and essential for T cell growth and differentiation. The T cell repertoire is generated in the thymus, by V-(D)-J rearrangement. This repertoire is then shaped by intrathymic selection events to generate a peripheral T cell pool of self-MH restricted, non-autoaggressive T cells. Post-thymic interaction of alpha-beta TR with the pMH complexes shapes TR structural and functional avidity. The sequence is that of T cell receptor beta variable 5-4 from Homo sapiens (Human).